A 222-amino-acid chain; its full sequence is PKHD-type hydroxylase cce_3668 (222 aa).

The region spanning 78 to 175 (HIHSLRFSRY…RLVVVGWVHS (98 aa)) is the Fe2OG dioxygenase domain. 3 residues coordinate Fe cation: His96, Asp98, and His156. Arg166 provides a ligand contact to 2-oxoglutarate.

Requires Fe(2+) as cofactor. It depends on L-ascorbate as a cofactor.

The sequence is that of PKHD-type hydroxylase cce_3668 from Crocosphaera subtropica (strain ATCC 51142 / BH68) (Cyanothece sp. (strain ATCC 51142)).